Consider the following 361-residue polypeptide: Peptide chain release factor 1 (361 aa).

An N5-methylglutamine modification is found at Gln235.

This sequence belongs to the prokaryotic/mitochondrial release factor family. Methylated by PrmC. Methylation increases the termination efficiency of RF1.

It localises to the cytoplasm. In terms of biological role, peptide chain release factor 1 directs the termination of translation in response to the peptide chain termination codons UAG and UAA. The chain is Peptide chain release factor 1 from Xanthomonas oryzae pv. oryzae (strain MAFF 311018).